Reading from the N-terminus, the 490-residue chain is Protein U94 (490 aa).

Residues 1-210 (MFSIINPSDD…SHFNKKPNVK (210 aa)) enclose the PV NS1-Nuc domain. The SF3 helicase domain maps to 312 to 463 (DPILAGTILY…IPRNFPVIQK (152 aa)). 338–345 (GPPGCGKS) is an ATP binding site.

The protein localises to the host nucleus. The chain is Protein U94 (U94) from Human herpesvirus 6B (HHV-6 variant B).